Consider the following 398-residue polypeptide: 1-deoxy-D-xylulose 5-phosphate reductoisomerase (398 aa).

Positions 21, 22, 23, 24, 47, 50, and 127 each coordinate NADPH. Lys-128 lines the 1-deoxy-D-xylulose 5-phosphate pocket. Glu-129 is an NADPH binding site. Asp-151 serves as a coordination point for Mn(2+). 1-deoxy-D-xylulose 5-phosphate contacts are provided by Ser-152, Glu-153, Ser-177, and His-200. Glu-153 serves as a coordination point for Mn(2+). Gly-206 is an NADPH binding site. The 1-deoxy-D-xylulose 5-phosphate site is built by Ser-213, Asn-218, Lys-219, and Glu-222. Residue Glu-222 coordinates Mn(2+).

Belongs to the DXR family. It depends on Mg(2+) as a cofactor. Mn(2+) serves as cofactor.

It carries out the reaction 2-C-methyl-D-erythritol 4-phosphate + NADP(+) = 1-deoxy-D-xylulose 5-phosphate + NADPH + H(+). It functions in the pathway isoprenoid biosynthesis; isopentenyl diphosphate biosynthesis via DXP pathway; isopentenyl diphosphate from 1-deoxy-D-xylulose 5-phosphate: step 1/6. Functionally, catalyzes the NADPH-dependent rearrangement and reduction of 1-deoxy-D-xylulose-5-phosphate (DXP) to 2-C-methyl-D-erythritol 4-phosphate (MEP). This chain is 1-deoxy-D-xylulose 5-phosphate reductoisomerase, found in Mycolicibacterium smegmatis (strain ATCC 700084 / mc(2)155) (Mycobacterium smegmatis).